A 238-amino-acid polypeptide reads, in one-letter code: MEEAKIPMLKLGPITFNLTLLAVCIVTIAVIFAFVFWASRQMKLKPEGKQTALEYLISFVDGIGEEHLDHNLQKSYSLLLFTIFLFVAVANNLGLFTKLETVNGYNLWTSPTANLAFDLALSLFITLMVHIEGVRRRGLVAHLKRLATPWPMTPMNLLEEFTNFLSLAIRLFGNIFAGEVVTGLIVQLANYRVYWWPIAFLVNMAWTAFSVFISCIQAFVFTKLTATYLGKKVNESEE.

A run of 5 helical transmembrane segments spans residues 18 to 38 (LTLLAVCIVTIAVIFAFVFWA), 76 to 96 (YSLLLFTIFLFVAVANNLGLF), 114 to 134 (NLAFDLALSLFITLMVHIEGV), 166 to 186 (SLAIRLFGNIFAGEVVTGLIV), and 193 to 213 (VYWWPIAFLVNMAWTAFSVFI).

The protein belongs to the ATPase A chain family. In terms of assembly, F-type ATPases have 2 components, CF(1) - the catalytic core - and CF(0) - the membrane proton channel. CF(1) has five subunits: alpha(3), beta(3), gamma(1), delta(1), epsilon(1). CF(0) has three main subunits: a(1), b(2) and c(9-12). The alpha and beta chains form an alternating ring which encloses part of the gamma chain. CF(1) is attached to CF(0) by a central stalk formed by the gamma and epsilon chains, while a peripheral stalk is formed by the delta and b chains.

It is found in the cell membrane. In terms of biological role, key component of the proton channel; it plays a direct role in the translocation of protons across the membrane. The polypeptide is ATP synthase subunit a (Streptococcus pyogenes serotype M49 (strain NZ131)).